Consider the following 2549-residue polypeptide: Serine/threonine-protein kinase mTOR (2549 aa).

Residue Met-1 is modified to N-acetylmethionine. The interaction with NBN stretch occupies residues 1-651 (MLGTGPAAAT…HVVSQTAVQV (651 aa)). HEAT repeat units lie at residues 16–53 (SSNV…MELR), 55–99 (MSQE…VEGG), 100–137 (NATR…AMAG), 138–179 (DTFT…AISV), 180–220 (PTFF…LILT), 222–276 (QREP…RISS), 277–313 (MEGE…PRHI), 314–364 (TPFT…CCRD), 365–409 (LMEE…AFTD), 410–445 (TQYL…VAVR), 446–494 (SEFK…RAMG), 495–529 (PGIQ…RQIP), 530–563 (QLKK…GLAH), 564–596 (QLAS…EFEG), 597–636 (HSLT…SIHL), 637–683 (ISGH…DERF), 686–724 (HLAQ…MNPA), 727–766 (MPFL…NAPR), 769–811 (RPYM…VSGL), 814–853 (RKWV…STGY), 857–893 (PYRK…LLGA), 894–942 (LDPY…GNLP), 943–988 (LDEF…KCVQ), 989–1027 (FLPQ…KSHI), 1029–1068 (PYMD…GEFK), 1069–1105 (LYLP…LFGA), 1106–1144 (NLDD…RLTE), 1145–1188 (SLDF…GKKY), 1189–1225 (QIFI…LADE), 1226–1273 (EEDP…GAAR), 1274–1311 (RVSK…QAYN), and 1312–1345 (PMAR…ELAL). The residue at position 567 (Ser-567) is a Phosphoserine. Thr-1162 bears the Phosphothreonine mark. Position 1218 is an N6-acetyllysine (Lys-1218). Ser-1261 carries the post-translational modification Phosphoserine. TPR repeat units follow at residues 1346 to 1382 (TSQD…GIVL), 1383 to 1408 (LGER…QKGP), 1409 to 1442 (TPAI…HFGE), 1443 to 1473 (LEIQ…NKDD), 1474 to 1507 (PELM…VNDE), 1508 to 1541 (TQAK…RDTH), 1542 to 1574 (DGAF…LDAE), 1575 to 1614 (LTAM…RREI), 1615 to 1649 (IRQI…PHED), 1650 to 1693 (MRTW…PTVH), 1694 to 1731 (PQVT…AQHA), 1732 to 1786 (IATE…DRSW), 1787 to 1846 (YKAW…STEG), 1898 to 1930 (NNLQ…VKAI), 1931 to 1970 (QIDT…YHPQ), and 1971 to 2005 (ALIY…SNTL). An FAT domain is found at 1382-1982 (LLGERAAKCR…IYPLTVASKS (601 aa)). 1D-myo-inositol hexakisphosphate-binding residues include Lys-1662, Lys-1702, and Arg-1749. The tract at residues 1812–1867 (DEKKKLRHASGANITNATTAATTAATATTTASTEGSNSESEAESTENSPTPSPLQK) is disordered. The segment covering 1820-1860 (ASGANITNATTAATTAATATTTASTEGSNSESEAESTENSP) has biased composition (low complexity). A sufficient for interaction with the FKBP1A/rapamycin complex region spans residues 2012–2144 (VSEELIRVAI…DLELAVPGTY (133 aa)). Lys-2066 is covalently cross-linked (Glycyl lysine isopeptide (Lys-Gly) (interchain with G-Cter in ubiquitin)). A PI3K/PI4K catalytic domain is found at 2156–2469 (IAPSLQVITS…GVELGEPAHK (314 aa)). Residue Ser-2159 is modified to Phosphoserine; by TBK1. The interval 2162–2168 (VITSKQR) is G-loop. Thr-2164 is subject to Phosphothreonine. 2 residues coordinate ATP: Ser-2165 and Gln-2167. The residue at position 2173 (Thr-2173) is a Phosphothreonine; by PKB/AKT1. Leu-2185, Lys-2187, Glu-2190, Tyr-2225, Gly-2238, Trp-2239, Val-2240, and Thr-2245 together coordinate ATP. Positions 2258 to 2296 (KILLNIEHRIMLRMAPDYDHLTLMQKVEVFEHAVNNTAG) are interaction with MLST8. Residues 2335–2343 (GLGDRHPSN) are catalytic loop. Asn-2343 contacts Mg(2+). Residues Met-2345 and Ile-2356 each coordinate ATP. The activation loop stretch occupies residues 2355-2380 (HIDFGDCFEVAMTREKFPEKIPFRLT). Residue Asp-2357 participates in Mg(2+) binding. Thr-2446 carries the phosphothreonine; by RPS6KB1 modification. Ser-2448 carries the post-translational modification Phosphoserine; by RPS6KB1. A Phosphoserine modification is found at Ser-2478. Ser-2481 carries the post-translational modification Phosphoserine; by autocatalysis. The region spanning 2517-2549 (DTLDVPTQVELLIKQATSHENLCQCYIGWCPFW) is the FATC domain.

This sequence belongs to the PI3/PI4-kinase family. In terms of assembly, part of the mechanistic target of rapamycin complex 1 (mTORC1) which contains MTOR, MLST8 and RPTOR. The mTORC1 complex is a 1 Md obligate dimer of two stoichiometric heterotetramers with overall dimensions of 290 A x 210 A x 135 A. It has a rhomboid shape and a central cavity, the dimeric interfaces are formed by interlocking interactions between the two MTOR and the two RPTOR subunits. The MLST8 subunit forms distal foot-like protuberances, and contacts only one MTOR within the complex, while the small AKT1S1/PRAS40 localizes to the midsection of the central core, in close proximity to RPTOR. mTORC1 associates with AKT1S1/PRAS40, which inhibits its activity by blocking MTOR substrate-recruitment site. Component of the mechanistic target of rapamycin complex 2 (mTORC2), consisting in two heterotretramers composed of MTOR, MLST8, RICTOR and MAPKAP1/SIN1. Interacts with PLPP7 and PML. Interacts with PRR5 and RICTOR; the interaction is direct within the mTORC2 complex and interaction with RICTOR is enhanced by deubiquitination of RICTOR by USP9X. mTORC1 and mTORC2 associate with DEPTOR, which regulates their activity. Interacts with WAC; WAC positively regulates MTOR activity by promoting the assembly of the TTT complex composed of TELO2, TTI1 and TTI2 and the RUVBL complex composed of RUVBL1 and RUVBL2 into the TTT-RUVBL complex which leads to the dimerization of the mTORC1 complex and its subsequent activation. Interacts with UBQLN1. Interacts with TTI1 and TELO2. Interacts with CLIP1; phosphorylates and regulates CLIP1. Interacts with NBN. Interacts with HTR6. Interacts with BRAT1. Interacts with MEAK7 (via C-terminal domain); the interaction increases upon nutrient stimulation. Interacts with TM4SF5; the interaction is positively regulated by arginine and is negatively regulated by leucine. Interacts with GPR137B. Interacts with NCKAP1L. Interacts with TPCN1 and TPCN2; the interaction is required for TPCN1 and TPCN2 sensitivity to ATP. Interacts with ATP6V1A and with CRYAB, forming a ternary complex. Interacts with SLC38A7; this interaction mediates the recruitment of mTORC1 to the lysosome and its subsequent activation. Interacts with TSPAN8. Autophosphorylates when part of mTORC1 or mTORC2. Phosphorylation at Ser-1261, Ser-2159 and Thr-2164 promotes autophosphorylation. Phosphorylated at Ser-2448 by RPS6KB1. Phosphorylation in the kinase domain modulates the interactions of MTOR with RPTOR and AKT1S1/PRAS40 and leads to increased intrinsic mTORC1 kinase activity. Phosphorylation at Ser-2159 by TBK1 in response to growth factors and pathogen recognition receptors promotes mTORC1 activity. Phosphorylation at Ser-2159 by TBK1 in response to EGF growth factor promotes mTORC2 activity, leading to AKT1 phosphorylation and activation. Phosphorylation at Thr-2173 in the ATP-binding region by AKT1 strongly reduces kinase activity. In terms of processing, ubiquitinated at Lys-2066 by the SCF(FBXO22) complex via 'Lys-27'-linked ubiquitination prevents mTORC1 substrate recruitment. In terms of tissue distribution, expressed in numerous tissues, with highest levels in testis.

It localises to the lysosome membrane. The protein resides in the endoplasmic reticulum membrane. Its subcellular location is the golgi apparatus membrane. The protein localises to the cell membrane. It is found in the mitochondrion outer membrane. It localises to the cytoplasm. The protein resides in the nucleus. Its subcellular location is the PML body. The protein localises to the microsome membrane. It is found in the cytoplasmic vesicle. It localises to the phagosome. The enzyme catalyses L-seryl-[protein] + ATP = O-phospho-L-seryl-[protein] + ADP + H(+). It catalyses the reaction L-threonyl-[protein] + ATP = O-phospho-L-threonyl-[protein] + ADP + H(+). The catalysed reaction is L-tyrosyl-[protein] + ATP = O-phospho-L-tyrosyl-[protein] + ADP + H(+). With respect to regulation, the mTORC1 complex is activated in response to nutrients, growth factors or amino acids: activation requires relocalization of the mTORC1 complex to lysosomes that is mediated by the Ragulator complex, SLC38A9, and the Rag GTPases RagA/RRAGA, RagB/RRAGB, RagC/RRAGC and RagD/RRAGD. Activation of mTORC1 by growth factors such as insulin involves AKT1-mediated phosphorylation of TSC1-TSC2, which leads to the activation of the RHEB GTPase a potent activator of the protein kinase activity of mTORC1. Insulin-stimulated and amino acid-dependent phosphorylation at Ser-1261 promotes autophosphorylation and the activation of mTORC1. On the other hand, low cellular energy levels can inhibit mTORC1 through activation of PRKAA1 while hypoxia inhibits mTORC1 through a REDD1-dependent mechanism which may also require PRKAA1. The kinase activity of MTOR within the mTORC1 complex is positively regulated by MLST8. The kinase activity of MTOR is inhibited by DEPTOR and AKT1S1. The non-canonical mTORC1 complex is independent of the RHEB GTPase and specifically mediates phosphorylation of MiT/TFE factors TFEB and TFE3 but not other mTORC1 substrates: it is activated by FLCN, which activates Rag GTPases RagC/RRAGC and RagD/RRAGD. MTOR is the target of the immunosuppressive and anti-cancer drug rapamycin which acts in complex with FKBP1A/FKBP12, and specifically inhibits its kinase activity. mTORC2 is also activated by growth factors, but seems to be nutrient-insensitive. mTORC2 associates and is directly activated by ribosomes. mTORC2 may also be regulated by RHEB but in an indirect manner through the PI3K signaling pathway. Functionally, serine/threonine protein kinase which is a central regulator of cellular metabolism, growth and survival in response to hormones, growth factors, nutrients, energy and stress signals. MTOR directly or indirectly regulates the phosphorylation of at least 800 proteins. Functions as part of 2 structurally and functionally distinct signaling complexes mTORC1 and mTORC2 (mTOR complex 1 and 2). In response to nutrients, growth factors or amino acids, mTORC1 is recruited to the lysosome membrane and promotes protein, lipid and nucleotide synthesis by phosphorylating key regulators of mRNA translation and ribosome synthesis. This includes phosphorylation of EIF4EBP1 and release of its inhibition toward the elongation initiation factor 4E (eiF4E). Moreover, phosphorylates and activates RPS6KB1 and RPS6KB2 that promote protein synthesis by modulating the activity of their downstream targets including ribosomal protein S6, eukaryotic translation initiation factor EIF4B, and the inhibitor of translation initiation PDCD4. Stimulates the pyrimidine biosynthesis pathway, both by acute regulation through RPS6KB1-mediated phosphorylation of the biosynthetic enzyme CAD, and delayed regulation, through transcriptional enhancement of the pentose phosphate pathway which produces 5-phosphoribosyl-1-pyrophosphate (PRPP), an allosteric activator of CAD at a later step in synthesis, this function is dependent on the mTORC1 complex. Regulates ribosome synthesis by activating RNA polymerase III-dependent transcription through phosphorylation and inhibition of MAF1 an RNA polymerase III-repressor. Activates dormant ribosomes by mediating phosphorylation of SERBP1, leading to SERBP1 inactivation and reactivation of translation. In parallel to protein synthesis, also regulates lipid synthesis through SREBF1/SREBP1 and LPIN1. To maintain energy homeostasis mTORC1 may also regulate mitochondrial biogenesis through regulation of PPARGC1A. In the same time, mTORC1 inhibits catabolic pathways: negatively regulates autophagy through phosphorylation of ULK1. Under nutrient sufficiency, phosphorylates ULK1 at 'Ser-758', disrupting the interaction with AMPK and preventing activation of ULK1. Also prevents autophagy through phosphorylation of the autophagy inhibitor DAP. Also prevents autophagy by phosphorylating RUBCNL/Pacer under nutrient-rich conditions. Prevents autophagy by mediating phosphorylation of AMBRA1, thereby inhibiting AMBRA1 ability to mediate ubiquitination of ULK1 and interaction between AMBRA1 and PPP2CA. mTORC1 exerts a feedback control on upstream growth factor signaling that includes phosphorylation and activation of GRB10 a INSR-dependent signaling suppressor. Among other potential targets mTORC1 may phosphorylate CLIP1 and regulate microtubules. The mTORC1 complex is inhibited in response to starvation and amino acid depletion. The non-canonical mTORC1 complex, which acts independently of RHEB, specifically mediates phosphorylation of MiT/TFE factors MITF, TFEB and TFE3 in the presence of nutrients, promoting their cytosolic retention and inactivation. Upon starvation or lysosomal stress, inhibition of mTORC1 induces dephosphorylation and nuclear translocation of TFEB and TFE3, promoting their transcription factor activity. The mTORC1 complex regulates pyroptosis in macrophages by promoting GSDMD oligomerization. MTOR phosphorylates RPTOR which in turn inhibits mTORC1. As part of the mTORC2 complex, MTOR transduces signals from growth factors to pathways involved in proliferation, cytoskeletal organization, lipogenesis and anabolic output. In response to growth factors, mTORC2 phosphorylates and activates AGC protein kinase family members, including AKT (AKT1, AKT2 and AKT3), PKC (PRKCA, PRKCB and PRKCE) and SGK1. In contrast to mTORC1, mTORC2 is nutrient-insensitive. mTORC2 plays a critical role in AKT1 activation by mediating phosphorylation of different sites depending on the context, such as 'Thr-450', 'Ser-473', 'Ser-477' or 'Thr-479', facilitating the phosphorylation of the activation loop of AKT1 on 'Thr-308' by PDPK1/PDK1 which is a prerequisite for full activation. mTORC2 also regulates the phosphorylation of SGK1 at 'Ser-422'. mTORC2 may regulate the actin cytoskeleton, through phosphorylation of PRKCA, PXN and activation of the Rho-type guanine nucleotide exchange factors RHOA and RAC1A or RAC1B. The mTORC2 complex also phosphorylates various proteins involved in insulin signaling, such as FBXW8 and IGF2BP1. May also regulate insulin signaling by acting as a tyrosine protein kinase that catalyzes phosphorylation of IGF1R and INSR; additional evidence are however required to confirm this result in vivo. Regulates osteoclastogenesis by adjusting the expression of CEBPB isoforms. Plays an important regulatory role in the circadian clock function; regulates period length and rhythm amplitude of the suprachiasmatic nucleus (SCN) and liver clocks. The sequence is that of Serine/threonine-protein kinase mTOR from Homo sapiens (Human).